We begin with the raw amino-acid sequence, 360 residues long: Phospho-N-acetylmuramoyl-pentapeptide-transferase (360 aa).

A run of 10 helical transmembrane segments spans residues Tyr21–Gly41, Thr73–Leu93, Ser94–Val114, Trp132–Gly152, Val168–Ser188, Gly199–Thr219, Leu239–Tyr259, Val263–Leu283, Leu288–Val308, and Val338–Lys358.

Belongs to the glycosyltransferase 4 family. MraY subfamily. It depends on Mg(2+) as a cofactor.

The protein localises to the cell inner membrane. It catalyses the reaction UDP-N-acetyl-alpha-D-muramoyl-L-alanyl-gamma-D-glutamyl-meso-2,6-diaminopimeloyl-D-alanyl-D-alanine + di-trans,octa-cis-undecaprenyl phosphate = di-trans,octa-cis-undecaprenyl diphospho-N-acetyl-alpha-D-muramoyl-L-alanyl-D-glutamyl-meso-2,6-diaminopimeloyl-D-alanyl-D-alanine + UMP. Its pathway is cell wall biogenesis; peptidoglycan biosynthesis. In terms of biological role, catalyzes the initial step of the lipid cycle reactions in the biosynthesis of the cell wall peptidoglycan: transfers peptidoglycan precursor phospho-MurNAc-pentapeptide from UDP-MurNAc-pentapeptide onto the lipid carrier undecaprenyl phosphate, yielding undecaprenyl-pyrophosphoryl-MurNAc-pentapeptide, known as lipid I. The sequence is that of Phospho-N-acetylmuramoyl-pentapeptide-transferase from Vibrio atlanticus (strain LGP32) (Vibrio splendidus (strain Mel32)).